We begin with the raw amino-acid sequence, 72 residues long: UPF0346 protein GTNG_1419 (72 aa).

This sequence belongs to the UPF0346 family.

The chain is UPF0346 protein GTNG_1419 from Geobacillus thermodenitrificans (strain NG80-2).